A 217-amino-acid polypeptide reads, in one-letter code: Homeobox protein Hox-B7 (217 aa).

The Antp-type hexapeptide motif lies at 126-131; that stretch reads IYPWMR. The segment at residues 137–196 is a DNA-binding region (homeobox); that stretch reads RKRGRQTYTRYQTLELEKEFHYNRYLTRRRRIEIAHTLCLTERQIKIWFQNRRMKWKKEN. A disordered region spans residues 192 to 217; sequence WKKENKTSGPGTTGQDKAEAEEEEEE.

This sequence belongs to the Antp homeobox family. In terms of assembly, forms a DNA-binding heterodimer with transcription factor PBX1.

The protein resides in the nucleus. Sequence-specific transcription factor which is part of a developmental regulatory system that provides cells with specific positional identities on the anterior-posterior axis. This Mus musculus (Mouse) protein is Homeobox protein Hox-B7 (Hoxb7).